Consider the following 409-residue polypeptide: Pectin acetylesterase 4 (409 aa).

The first 32 residues, 1–32 (MVIRSLLQCRTWSKSDWLLASIGIVLIVYSFS), serve as a signal peptide directing secretion. N-linked (GlcNAc...) asparagine glycosylation is found at Asn36 and Asn163. Residues Ser199, Asp295, and His362 each act as charge relay system in the active site. Residues Asn379 and Asn406 are each glycosylated (N-linked (GlcNAc...) asparagine).

The protein belongs to the pectinacetylesterase family.

The protein resides in the secreted. Its subcellular location is the cell wall. In terms of biological role, hydrolyzes acetyl esters in homogalacturonan regions of pectin. In type I primary cell wall, galacturonic acid residues of pectin can be acetylated at the O-2 and O-3 positions. Decreasing the degree of acetylation of pectin gels in vitro alters their physical properties. This Arabidopsis thaliana (Mouse-ear cress) protein is Pectin acetylesterase 4.